Consider the following 177-residue polypeptide: ATP synthase subunit delta (177 aa).

It belongs to the ATPase delta chain family. F-type ATPases have 2 components, F(1) - the catalytic core - and F(0) - the membrane proton channel. F(1) has five subunits: alpha(3), beta(3), gamma(1), delta(1), epsilon(1). F(0) has three main subunits: a(1), b(2) and c(10-14). The alpha and beta chains form an alternating ring which encloses part of the gamma chain. F(1) is attached to F(0) by a central stalk formed by the gamma and epsilon chains, while a peripheral stalk is formed by the delta and b chains.

It localises to the cell inner membrane. In terms of biological role, f(1)F(0) ATP synthase produces ATP from ADP in the presence of a proton or sodium gradient. F-type ATPases consist of two structural domains, F(1) containing the extramembraneous catalytic core and F(0) containing the membrane proton channel, linked together by a central stalk and a peripheral stalk. During catalysis, ATP synthesis in the catalytic domain of F(1) is coupled via a rotary mechanism of the central stalk subunits to proton translocation. Its function is as follows. This protein is part of the stalk that links CF(0) to CF(1). It either transmits conformational changes from CF(0) to CF(1) or is implicated in proton conduction. The protein is ATP synthase subunit delta of Shewanella sp. (strain MR-4).